The sequence spans 163 residues: Large ribosomal subunit protein uL10 (163 aa).

It belongs to the universal ribosomal protein uL10 family. As to quaternary structure, part of the ribosomal stalk of the 50S ribosomal subunit. The N-terminus interacts with L11 and the large rRNA to form the base of the stalk. The C-terminus forms an elongated spine to which L12 dimers bind in a sequential fashion forming a multimeric L10(L12)X complex.

Functionally, forms part of the ribosomal stalk, playing a central role in the interaction of the ribosome with GTP-bound translation factors. This chain is Large ribosomal subunit protein uL10, found in Blochmanniella pennsylvanica (strain BPEN).